Consider the following 953-residue polypeptide: UvrABC system protein A (953 aa).

33–40 (GLSGSGKS) lines the ATP pocket. ABC transporter domains follow at residues 320 to 599 (WGST…EESI) and 619 to 949 (GHDN…RYLK). 652–659 (GVSGSGKS) contributes to the ATP binding site. The C4-type zinc finger occupies 752 to 778 (CEACQGDGLIKIEMHFLPDVYVKCDIC).

The protein belongs to the ABC transporter superfamily. UvrA family. In terms of assembly, forms a heterotetramer with UvrB during the search for lesions.

The protein localises to the cytoplasm. The UvrABC repair system catalyzes the recognition and processing of DNA lesions. UvrA is an ATPase and a DNA-binding protein. A damage recognition complex composed of 2 UvrA and 2 UvrB subunits scans DNA for abnormalities. When the presence of a lesion has been verified by UvrB, the UvrA molecules dissociate. The polypeptide is UvrABC system protein A (Rickettsia bellii (strain RML369-C)).